The chain runs to 848 residues: ATP-dependent RNA helicase dbp10 (848 aa).

The disordered stretch occupies residues 22–43 (DIATDNQKDKHENVGENVSDED). The short motif at 69 to 97 (SNFQSMGLNQTLLRAIFKKGFKAPTPIQR) is the Q motif element. One can recognise a Helicase ATP-binding domain in the interval 100–272 (IPLLLEGRDV…KAGLQDPVLV (173 aa)). 113-120 (ARTGSGKT) is an ATP binding site. The DEAD box motif lies at 220-223 (DEAD). A Helicase C-terminal domain is found at 330–480 (RKRALELALK…TSSKQVKTDS (151 aa)). The interval 610–650 (NKVKPKGIKSEVASDKITDSSPGNMSEASESELEEVFKNPK) is disordered. Positions 617 to 627 (IKSEVASDKIT) are enriched in basic and acidic residues. The span at 628–637 (DSSPGNMSEA) shows a compositional bias: polar residues. A phosphoserine mark is found at Ser638, Ser733, and Ser736. Positions 768 to 813 (ANDSPIRENKRYKHNKLQTPKPADKFRDNYHKQNKRNREAKERGIG) are disordered. The span at 789-812 (PADKFRDNYHKQNKRNREAKERGI) shows a compositional bias: basic and acidic residues.

This sequence belongs to the DEAD box helicase family. DDX54/DBP10 subfamily.

It is found in the nucleus. Its subcellular location is the nucleolus. It catalyses the reaction ATP + H2O = ADP + phosphate + H(+). ATP-binding RNA helicase involved in the biogenesis of 60S ribosomal subunits and is required for the normal formation of 25S and 5.8S rRNAs. In Schizosaccharomyces pombe (strain 972 / ATCC 24843) (Fission yeast), this protein is ATP-dependent RNA helicase dbp10 (dbp10).